The sequence spans 376 residues: UDP-N-acetylglucosamine--N-acetylmuramyl-(pentapeptide) pyrophosphoryl-undecaprenol N-acetylglucosamine transferase (376 aa).

UDP-N-acetyl-alpha-D-glucosamine is bound by residues 14–16 (TGG), Asn-128, Arg-169, Ser-201, Ile-256, and Gln-301.

It belongs to the glycosyltransferase 28 family. MurG subfamily.

Its subcellular location is the cell inner membrane. It catalyses the reaction di-trans,octa-cis-undecaprenyl diphospho-N-acetyl-alpha-D-muramoyl-L-alanyl-D-glutamyl-meso-2,6-diaminopimeloyl-D-alanyl-D-alanine + UDP-N-acetyl-alpha-D-glucosamine = di-trans,octa-cis-undecaprenyl diphospho-[N-acetyl-alpha-D-glucosaminyl-(1-&gt;4)]-N-acetyl-alpha-D-muramoyl-L-alanyl-D-glutamyl-meso-2,6-diaminopimeloyl-D-alanyl-D-alanine + UDP + H(+). The protein operates within cell wall biogenesis; peptidoglycan biosynthesis. Its function is as follows. Cell wall formation. Catalyzes the transfer of a GlcNAc subunit on undecaprenyl-pyrophosphoryl-MurNAc-pentapeptide (lipid intermediate I) to form undecaprenyl-pyrophosphoryl-MurNAc-(pentapeptide)GlcNAc (lipid intermediate II). In Phocaeicola vulgatus (strain ATCC 8482 / DSM 1447 / JCM 5826 / CCUG 4940 / NBRC 14291 / NCTC 11154) (Bacteroides vulgatus), this protein is UDP-N-acetylglucosamine--N-acetylmuramyl-(pentapeptide) pyrophosphoryl-undecaprenol N-acetylglucosamine transferase.